The chain runs to 354 residues: Prephenate dehydrogenase (354 aa).

In terms of domain architecture, Prephenate/arogenate dehydrogenase spans 2-283 (KKILIIGLGL…AMEIHKGALP (282 aa)). 3–33 (KILIIGLGLIGSSIALGIKKAHPEFEILGSD) contributes to the NAD(+) binding site. Residues 287–354 (DLFISVPDEK…IEKATDFTVV (68 aa)) enclose the ACT domain.

The protein belongs to the prephenate/arogenate dehydrogenase family.

The catalysed reaction is prephenate + NAD(+) = 3-(4-hydroxyphenyl)pyruvate + CO2 + NADH. The protein operates within amino-acid biosynthesis; L-tyrosine biosynthesis; (4-hydroxyphenyl)pyruvate from prephenate (NAD(+) route): step 1/1. This Lactococcus lactis subsp. cremoris (strain MG1363) protein is Prephenate dehydrogenase (tyrA).